Here is a 334-residue protein sequence, read N- to C-terminus: Formamidase (334 aa).

The CN hydrolase domain maps to 14–260; sequence FLVAAIQFPV…WEIVTGEIYP (247 aa). Glu60 serves as the catalytic Proton acceptor. The active-site Proton donor is the Lys133. Cys166 functions as the Nucleophile in the catalytic mechanism.

This sequence belongs to the carbon-nitrogen hydrolase superfamily. Aliphatic amidase family. Homotetramer.

The enzyme catalyses formamide + H2O = formate + NH4(+). With respect to regulation, inhibited by iodoacetate. Appears to be regulated by the fur protein, but this effect is not mediated at the transcriptional level. Its function is as follows. Is an aliphatic amidase with a restricted substrate specificity, as it only hydrolyzes formamide. Probably involved in the nitrogen metabolism of H.pylori. The chain is Formamidase (amiF) from Helicobacter pylori (strain ATCC 700392 / 26695) (Campylobacter pylori).